A 190-amino-acid chain; its full sequence is Large ribosomal subunit protein eL15 (190 aa).

This sequence belongs to the eukaryotic ribosomal protein eL15 family.

The polypeptide is Large ribosomal subunit protein eL15 (rpl15e) (Nanoarchaeum equitans (strain Kin4-M)).